The chain runs to 268 residues: ClpXP adapter protein SpxH (268 aa).

The protein belongs to the SpxH family. Interacts with Spx.

It is found in the cytoplasm. In terms of biological role, adapter protein required for efficient degradation of Spx by ClpXP under non-stress conditions. Interaction with Spx stabilizes Spx and exposes the C-terminus of Spx for recognition and proteolysis by ClpXP. The sequence is that of ClpXP adapter protein SpxH from Staphylococcus aureus (strain Mu3 / ATCC 700698).